The following is a 1914-amino-acid chain: Myosin light chain kinase, smooth muscle (1914 aa).

Position 2 is an N-acetylalanine (glycine 2). Ig-like C2-type domains are found at residues 33–122 (PAFI…VELT) and 161–249 (PKFA…AELS). Cysteine 182 and cysteine 233 are oxidised to a cystine. Tyrosine 231 is subject to Phosphotyrosine; by ABL1. Residues 286–393 (DSLEAAAKSK…TRQPGLGSQD (108 aa)) are disordered. A Phosphoserine modification is found at serine 305. A compositionally biased stretch (basic and acidic residues) spans 318-329 (RESKLESCKDSP). The span at 331–347 (TAPQTPVLQKTSSSITL) shows a compositional bias: polar residues. Phosphoserine is present on residues serine 343 and serine 365. Ig-like C2-type domains are found at residues 414 to 503 (PKFE…WTLQ) and 514 to 599 (PSFS…AWVT). 2 disulfide bridges follow: cysteine 435–cysteine 487 and cysteine 535–cysteine 583. The residue at position 464 (tyrosine 464) is a Phosphotyrosine; by ABL1 and SRC. At tyrosine 471 the chain carries Phosphotyrosine; by SRC. Tyrosine 556 carries the post-translational modification Phosphotyrosine; by ABL1. An N6-acetyllysine modification is found at lysine 608. Tyrosine 611 carries the phosphotyrosine; by ABL1 modification. 2 Ig-like C2-type domains span residues 620–711 (PTAP…AVLT) and 721–821 (PWFI…ALPR). Cysteines 742 and 805 form a disulfide. Residues tyrosine 792 and tyrosine 846 each carry the phosphotyrosine; by ABL1 modification. 4 tandem repeats follow at residues 868-895 (DVRG…VEQL), 896-923 (DFRD…AEQM), 924-951 (DFRA…PQQV), and 952-979 (DFRS…PATP). Residues 868–998 (DVRGVLKRRV…KKLPAENGSS (131 aa)) form a 5 X 28 AA approximate tandem repeats region. The tract at residues 923 to 963 (MDFRANLQRQVKPKTVSEEERKVHSPQQVDFRSVLAKKGTS) is actin-binding (calcium/calmodulin-sensitive). The segment at 932-1098 (QVKPKTVSEE…KRSESQGTAP (167 aa)) is disordered. Position 947 is a phosphoserine (serine 947). The segment at 948–963 (PQQVDFRSVLAKKGTS) is calmodulin-binding. The stretch at 980-998 (DFRSVLGGKKKLPAENGSS) is one 1-5; truncated repeat. Residues 999–1003 (SAETL) form a 2-1; truncated repeat. Residues 999–1063 (SAETLNAKAV…KPDENLKSAS (65 aa)) form a 6 X 12 AA approximate tandem repeats region. 5 consecutive repeat copies span residues 1004–1015 (NAKAVESSKPLS), 1016–1027 (NAQPSGPLKPVG), 1028–1039 (NAKPAETLKPMG), 1040–1051 (NAKPAETLKPMG), and 1052–1063 (NAKPDENLKSAS). The span at 1054–1077 (KPDENLKSASKEELKKDVKNDVNC) shows a compositional bias: basic and acidic residues. Residues 1061-1460 (SASKEELKKD…TVTINTEQKV (400 aa)) are actin-binding (calcium/calmodulin-insensitive). The Ig-like C2-type 7 domain occupies 1098 to 1186 (PAFKQKLQDV…GQAECSCQVT (89 aa)). Cysteine 1119 and cysteine 1170 form a disulfide bridge. The disordered stretch occupies residues 1192-1237 (ASENTKAPEMKSRRPKSSLPPVLGTESDATVKKKPAPKTPPKAAMP). The Ig-like C2-type 8 domain maps to 1238–1326 (PQIIQFPEDQ…GSRQAQVNLT (89 aa)). The Fibronectin type-III domain occupies 1334-1426 (PAGTPCASDI…QESELTTVGE (93 aa)). Over residues 1413–1422 (SEPSQESELT) the composition is skewed to polar residues. The interval 1413 to 1446 (SEPSQESELTTVGEKPEEPKDEVEVSDDDEKEPE) is disordered. The span at 1431 to 1445 (PKDEVEVSDDDEKEP) shows a compositional bias: acidic residues. Serine 1438 carries the phosphoserine modification. Phosphotyrosine; by ABL1 is present on tyrosine 1449. The region spanning 1464–1719 (YDIEERLGSG…CTQCLQHPWL (256 aa)) is the Protein kinase domain. ATP-binding positions include 1470 to 1478 (LGSGKFGQV) and lysine 1493. The residue at position 1575 (tyrosine 1575) is a Phosphotyrosine; by ABL1. The active-site Proton acceptor is the aspartate 1585. Position 1635 is a phosphotyrosine; by ABL1 (tyrosine 1635). The interval 1711-1774 (TQCLQHPWLM…SGLSGRKSST (64 aa)) is calmodulin-binding. Phosphoserine occurs at positions 1759, 1760, 1772, 1773, and 1776. The segment at 1767-1787 (LSGRKSSTGSPTSPLNAEKLE) is disordered. Residues 1770–1781 (RKSSTGSPTSPL) show a composition bias toward polar residues. The residue at position 1778 (threonine 1778) is a Phosphothreonine. The residue at position 1779 (serine 1779) is a Phosphoserine. The 90-residue stretch at 1809–1898 (PYFSKTIRDL…GEATCTAELI (90 aa)) folds into the Ig-like C2-type 9 domain. Cysteine 1830 and cysteine 1882 are disulfide-bonded.

Belongs to the protein kinase superfamily. CAMK Ser/Thr protein kinase family. In terms of assembly, all isoforms including Telokin bind calmodulin. Interacts with SVIL. Interacts with CTTN; this interaction is reduced during thrombin-induced endothelial cell (EC) contraction but is promoted by the barrier-protective agonist sphingosine 1-phosphate (S1P) within lamellipodia. A complex made of ABL1, CTTN and MYLK regulates cortical actin-based cytoskeletal rearrangement critical to sphingosine 1-phosphate (S1P)-mediated endothelial cell (EC) barrier enhancement. Binds to NAA10/ARD1 and PTK2B/PYK2. Mg(2+) serves as cofactor. Requires Ca(2+) as cofactor. In terms of processing, can probably be down-regulated by phosphorylation. Tyrosine phosphorylation by ABL1 increases kinase activity, reverses MLCK-mediated inhibition of Arp2/3-mediated actin polymerization, and enhances CTTN-binding. Phosphorylation by SRC at Tyr-464 and Tyr-471 promotes CTTN binding. The C-terminus is deglutamylated by AGTPBP1/CCP1, AGBL1/CCP4 and AGBL4/CCP6, leading to the formation of Myosin light chain kinase, smooth muscle, deglutamylated form. The consequences of C-terminal deglutamylation are unknown. Post-translationally, acetylated at Lys-608 by NAA10/ARD1 via a calcium-dependent signaling; this acetylation represses kinase activity and reduces tumor cell migration. Smooth muscle and non-muscle isozymes are expressed in a wide variety of adult and fetal tissues and in cultured endothelium with qualitative expression appearing to be neither tissue- nor development-specific. Non-muscle isoform 2 is the dominant splice variant expressed in various tissues. Telokin has been found in a wide variety of adult and fetal tissues. Accumulates in well differentiated enterocytes of the intestinal epithelium in response to tumor necrosis factor (TNF).

Its subcellular location is the cytoplasm. The protein resides in the cell projection. It localises to the lamellipodium. It is found in the cleavage furrow. The protein localises to the cytoskeleton. Its subcellular location is the stress fiber. The catalysed reaction is L-seryl-[myosin light chain] + ATP = O-phospho-L-seryl-[myosin light chain] + ADP + H(+). It carries out the reaction L-threonyl-[myosin light chain] + ATP = O-phospho-L-threonyl-[myosin light chain] + ADP + H(+). Isoform 1 is activated by phosphorylation on Tyr-464 and Tyr-471. Isoforms which lack these tyrosine residues are not regulated in this way. All catalytically active isoforms require binding to calcium and calmodulin for activation. Repressed by organometallic pyridylnaphthalimide complexes, wortmannin, ML-7 (a synthetic naphthalenesulphonyl derivative that inhibits the binding of ATP to MLCK) and ML-9. In terms of biological role, calcium/calmodulin-dependent myosin light chain kinase implicated in smooth muscle contraction via phosphorylation of myosin light chains (MLC). Also regulates actin-myosin interaction through a non-kinase activity. Phosphorylates PTK2B/PYK2 and myosin light-chains. Involved in the inflammatory response (e.g. apoptosis, vascular permeability, leukocyte diapedesis), cell motility and morphology, airway hyperreactivity and other activities relevant to asthma. Required for tonic airway smooth muscle contraction that is necessary for physiological and asthmatic airway resistance. Necessary for gastrointestinal motility. Implicated in the regulation of endothelial as well as vascular permeability, probably via the regulation of cytoskeletal rearrangements. In the nervous system it has been shown to control the growth initiation of astrocytic processes in culture and to participate in transmitter release at synapses formed between cultured sympathetic ganglion cells. Critical participant in signaling sequences that result in fibroblast apoptosis. Plays a role in the regulation of epithelial cell survival. Required for epithelial wound healing, especially during actomyosin ring contraction during purse-string wound closure. Mediates RhoA-dependent membrane blebbing. Triggers TRPC5 channel activity in a calcium-dependent signaling, by inducing its subcellular localization at the plasma membrane. Promotes cell migration (including tumor cells) and tumor metastasis. PTK2B/PYK2 activation by phosphorylation mediates ITGB2 activation and is thus essential to trigger neutrophil transmigration during acute lung injury (ALI). May regulate optic nerve head astrocyte migration. Probably involved in mitotic cytoskeletal regulation. Regulates tight junction probably by modulating ZO-1 exchange in the perijunctional actomyosin ring. Mediates burn-induced microvascular barrier injury; triggers endothelial contraction in the development of microvascular hyperpermeability by phosphorylating MLC. Essential for intestinal barrier dysfunction. Mediates Giardia spp.-mediated reduced epithelial barrier function during giardiasis intestinal infection via reorganization of cytoskeletal F-actin and tight junctional ZO-1. Necessary for hypotonicity-induced Ca(2+) entry and subsequent activation of volume-sensitive organic osmolyte/anion channels (VSOAC) in cervical cancer cells. Responsible for high proliferative ability of breast cancer cells through anti-apoptosis. The sequence is that of Myosin light chain kinase, smooth muscle from Homo sapiens (Human).